We begin with the raw amino-acid sequence, 401 residues long: Nicotinate phosphoribosyltransferase (401 aa).

His221 is modified (phosphohistidine; by autocatalysis).

Belongs to the NAPRTase family. Transiently phosphorylated on a His residue during the reaction cycle. Phosphorylation strongly increases the affinity for substrates and increases the rate of nicotinate D-ribonucleotide production. Dephosphorylation regenerates the low-affinity form of the enzyme, leading to product release.

It catalyses the reaction nicotinate + 5-phospho-alpha-D-ribose 1-diphosphate + ATP + H2O = nicotinate beta-D-ribonucleotide + ADP + phosphate + diphosphate. The protein operates within cofactor biosynthesis; NAD(+) biosynthesis; nicotinate D-ribonucleotide from nicotinate: step 1/1. Its function is as follows. Catalyzes the synthesis of beta-nicotinate D-ribonucleotide from nicotinate and 5-phospho-D-ribose 1-phosphate at the expense of ATP. The polypeptide is Nicotinate phosphoribosyltransferase (Erwinia tasmaniensis (strain DSM 17950 / CFBP 7177 / CIP 109463 / NCPPB 4357 / Et1/99)).